A 574-amino-acid polypeptide reads, in one-letter code: Glutamyl-tRNA(Gln) amidotransferase subunit B, mitochondrial (574 aa).

It belongs to the GatB/GatE family. GatB subfamily. Subunit of the heterotrimeric GatCAB amidotransferase (AdT) complex, composed of A, B and C subunits.

It localises to the mitochondrion. It carries out the reaction L-glutamyl-tRNA(Gln) + L-glutamine + ATP + H2O = L-glutaminyl-tRNA(Gln) + L-glutamate + ADP + phosphate + H(+). Its function is as follows. Allows the formation of correctly charged Gln-tRNA(Gln) through the transamidation of misacylated Glu-tRNA(Gln) in the mitochondria. The reaction takes place in the presence of glutamine and ATP through an activated gamma-phospho-Glu-tRNA(Gln). This chain is Glutamyl-tRNA(Gln) amidotransferase subunit B, mitochondrial, found in Phytophthora infestans (strain T30-4) (Potato late blight agent).